A 231-amino-acid polypeptide reads, in one-letter code: MTQDELKRLVGQAAADYVIQNVPEGAVIGVGTGSTANCFIDALAAVKSRYRGAVSSSIATTERLKSHGIKVFDLNEIESLQVYVDGADEIDAGGAMIKGGGGALTREKIVASVADTFVCIADASKRVPVLGAFPLPIEVVPMARTAIGRRVTALGGVPVLRVTKDGAPYITDNGNEIIDVKGLQIADPRGFEAQVNAWPGVVTVGLFAERGANLCLLGTENGVETIVYPAG.

Substrate contacts are provided by residues 32–35 (TGST), 85–88 (DGAD), and 98–101 (KGGG). Glutamate 107 serves as the catalytic Proton acceptor. Lysine 125 contacts substrate.

The protein belongs to the ribose 5-phosphate isomerase family. Homodimer.

It carries out the reaction aldehydo-D-ribose 5-phosphate = D-ribulose 5-phosphate. It functions in the pathway carbohydrate degradation; pentose phosphate pathway; D-ribose 5-phosphate from D-ribulose 5-phosphate (non-oxidative stage): step 1/1. Catalyzes the reversible conversion of ribose-5-phosphate to ribulose 5-phosphate. The chain is Ribose-5-phosphate isomerase A from Burkholderia orbicola (strain MC0-3).